We begin with the raw amino-acid sequence, 159 residues long: MSATDPIQRVETLLQPILDAMGLELVELEFKKVGRSYLLRVFIDKPDGVNLDDCAEVSRELSVQLDVEDCIASRYTLEVSSPGLDRPLKKEQDFIRYQGRLAVVKTTELLKDEKGSPRKTFLGFLEGVEDGEVMIRLKEGPQARIPWDKIAKAHLEFEF.

It belongs to the RimP family.

It is found in the cytoplasm. Functionally, required for maturation of 30S ribosomal subunits. In Trichlorobacter lovleyi (strain ATCC BAA-1151 / DSM 17278 / SZ) (Geobacter lovleyi), this protein is Ribosome maturation factor RimP.